The following is a 73-amino-acid chain: Acyl carrier protein (73 aa).

The Carrier domain maps to Met-1–Lys-73. Residue Ser-35 is modified to O-(pantetheine 4'-phosphoryl)serine.

This sequence belongs to the acyl carrier protein (ACP) family. 4'-phosphopantetheine is transferred from CoA to a specific serine of apo-ACP by AcpS. This modification is essential for activity because fatty acids are bound in thioester linkage to the sulfhydryl of the prosthetic group.

It localises to the cytoplasm. The protein operates within lipid metabolism; fatty acid biosynthesis. Functionally, carrier of the growing fatty acid chain in fatty acid biosynthesis. In Lactococcus lactis subsp. lactis (strain IL1403) (Streptococcus lactis), this protein is Acyl carrier protein.